We begin with the raw amino-acid sequence, 1065 residues long: Tubulin glycylase 3C (1065 aa).

Disordered regions lie at residues 1–146 (MSSL…REDK), 158–182 (IREQ…TKSK), 301–326 (STQK…DIAK), 341–360 (EKKR…KEQL), 381–482 (FFVD…GNGS), and 708–755 (NKQK…EKQM). Residues 23–53 (QEGNQEDLNNQNDHNLNNNELDSLSSPPSDN) are compositionally biased toward low complexity. Over residues 54–63 (YNEEEFEQED) the composition is skewed to acidic residues. Positions 73-92 (QNASQNNISQTQRISQTQLP) are enriched in polar residues. The span at 122-146 (LMEKKKKEQEEKEKKELKLKKREDK) shows a compositional bias: basic and acidic residues. Residues 166–179 (LESQTEQSDHSNVT) are compositionally biased toward polar residues. Basic and acidic residues predominate over residues 313–326 (EGDKEKDDKKDIAK). Residues 385-403 (VPEKKPKKEKKKNESKEDN) are compositionally biased toward basic and acidic residues. Over residues 404–423 (IQITSPKLNSTKSLSSQITR) the composition is skewed to polar residues. Over residues 424–450 (KTNDAKKVEKLPKIKDSNKENHSKERN) the composition is skewed to basic and acidic residues. Over residues 451-479 (EDNEEGDDGEYECDEGDEGASDGEDEDDG) the composition is skewed to acidic residues. Positions 633 to 1009 (YFEKDPDIEK…DYGMEKSKKA (377 aa)) constitute a TTL domain. The span at 709-721 (KQKPKKKKKKSKK) shows a compositional bias: basic residues. A compositionally biased stretch (basic and acidic residues) spans 722–733 (DKQQGDTEKKEE). The span at 734 to 754 (EEGEAEDEEEDEEDEEEEEKQ) shows a compositional bias: acidic residues. ATP contacts are provided by residues 821-824 (QKYI), lysine 834, and aspartate 836.

The protein resides in the cell projection. Its subcellular location is the cilium. It is found in the cytoplasm. The protein localises to the cytoskeleton. It localises to the cilium axoneme. Probable glycylase which modifies tubulin, generating side chains of glycine on the gamma-carboxyl groups of specific glutamate residues within the C-terminal tail of tubulin. The polypeptide is Tubulin glycylase 3C (TTLL3C) (Tetrahymena thermophila (strain SB210)).